Here is a 670-residue protein sequence, read N- to C-terminus: MAETKIIYHMDEEETPYLVKLPVAPERVTLADFKNVLSNRPVHAYKFFFKSMDQDFGVVKEEIFDDNAKLPCFNGRVVSWLVLVEGAHSDAGSQGTDSHTDLPPPLERTGGIGDSRSPSFQPDVASSRDGMDNETGTESMVSHRRDRARRRNREEAARTNGHPRGDRRRDVGLPPDSASTALSSELESSSFVDSDEDDSTSRLSSSTEQSTSSRLIRKHKRRRRKQRLRQADRASSFSSMTDSTMSLNIITVTLNMERHHFLGICIVGQSNDRGDGGIYIGSIMKGGAVAADGRIEPGDMLLQVNDVNFENMSNDDAVRVLREIVSQTGPISLTVAKCWDPTPRSYFTVPRPDPVRPIDPAAWLSHTAALTGALPRPQLEEAPLTVESDMNTVVRVMQLPDSGLEIRDRMWLKITIANAVIGADVVDWLYTHVEGFKERREARKYASSLLKHGFLRHTVNKITFSEQCYYVFGDLCSNLATLNLNSGSSGTSDQDTLAPLPHPAAPWPLGQGYPYQYPGPPPCFPPAYQDPGFSYGSGSTGSQQSEGSKSSGSTRNTLRPPACEKERRAAGSGDSDSESDHTAPSGVGSSWRERPADQLSRGSSPRSQASSYAPGLPPPHPTTKAYTVVGGPPGGPPVRELAAVPPELTGSRQSFQKAMGNPCEFFVDIM.

In terms of domain architecture, DIX spans 1 to 85; it reads MAETKIIYHM…RVVSWLVLVE (85 aa). The segment at 89–240 is disordered; that stretch reads SDAGSQGTDS…ADRASSFSSM (152 aa). Over residues 142 to 151 the composition is skewed to basic residues; that stretch reads SHRRDRARRR. The span at 152 to 171 shows a compositional bias: basic and acidic residues; that stretch reads NREEAARTNGHPRGDRRRDV. Composition is skewed to low complexity over residues 176–192 and 201–214; these read DSAS…SSFV and SRLS…TSSR. A compositionally biased stretch (basic residues) spans 215-228; the sequence is LIRKHKRRRRKQRL. In terms of domain architecture, PDZ spans 251–323; it reads TVTLNMERHH…NDDAVRVLRE (73 aa). One can recognise a DEP domain in the interval 400–474; sequence PDSGLEIRDR…SEQCYYVFGD (75 aa). Positions 518–642 are disordered; sequence PGPPPCFPPA…PGGPPVRELA (125 aa). Low complexity-rich tracts occupy residues 526–553 and 600–614; these read PAYQ…SSGS and SRGS…SYAP.

It belongs to the DSH family. Expressed in thymus, heart, liver, kidney, brain, skeletal muscle, and pancreas.

The protein localises to the cytoplasm. In terms of biological role, may play a role in the signal transduction pathway mediated by multiple Wnt genes. In Homo sapiens (Human), this protein is Putative segment polarity protein dishevelled homolog DVL1P1 (DVL1P1).